A 33-amino-acid polypeptide reads, in one-letter code: Pardaxin P-5 (33 aa).

It belongs to the pardaxin family. Monomer. In aqueous solution exists as a tetramer.

It is found in the secreted. It localises to the target cell membrane. Its function is as follows. Exhibits unusual shark repellent and surfactant properties. Forms voltage-dependent, ion-permeable channels in membranes. At high concentration causes cell membrane lysis. This is Pardaxin P-5 from Pardachirus marmoratus (Finless sole).